Here is a 189-residue protein sequence, read N- to C-terminus: Chitin synthase 1 (189 aa).

Belongs to the chitin synthase family. Class I subfamily.

The protein localises to the cell membrane. It carries out the reaction [(1-&gt;4)-N-acetyl-beta-D-glucosaminyl](n) + UDP-N-acetyl-alpha-D-glucosamine = [(1-&gt;4)-N-acetyl-beta-D-glucosaminyl](n+1) + UDP + H(+). In terms of biological role, polymerizes chitin, a structural polymer of the cell wall and septum, by transferring the sugar moiety of UDP-GlcNAc to the non-reducing end of the growing chitin polymer. This chain is Chitin synthase 1 (CHS1), found in Rhinocladiella atrovirens.